The chain runs to 552 residues: Carotenoid cleavage dioxygenase 8 homolog A, chloroplastic (552 aa).

A chloroplast-targeting transit peptide spans M1–R43. The segment at S32–R73 is disordered. Over residues S59–V72 the composition is skewed to polar residues. Fe cation contacts are provided by H239, H289, H356, and H543.

This sequence belongs to the carotenoid oxygenase family. Fe(2+) serves as cofactor. Highly expressed in panicles, inflorescences and parenchyma cells of the root stele, and at lower levels in shoot apex, leaf buds and xylem parenchyma cells of the stem.

Its subcellular location is the plastid. It localises to the chloroplast. Its function is as follows. May be involved in strigolactones biosynthesis. In Oryza sativa subsp. japonica (Rice), this protein is Carotenoid cleavage dioxygenase 8 homolog A, chloroplastic (CCD8A).